The sequence spans 651 residues: Translation factor GUF1 homolog, mitochondrial (651 aa).

A mitochondrion-targeting transit peptide spans 1–26 (MAVTRAAAPMVGNCSSAMLIIGRRYF). The tr-type G domain occupies 51–228 (KKIRNFGIVA…AVVERLPPPK (178 aa)). Residues 60–67 (AHVDHGKS), 121–125 (DTPGH), and 175–178 (NKVD) contribute to the GTP site.

Belongs to the TRAFAC class translation factor GTPase superfamily. Classic translation factor GTPase family. LepA subfamily.

Its subcellular location is the mitochondrion inner membrane. It carries out the reaction GTP + H2O = GDP + phosphate + H(+). Promotes mitochondrial protein synthesis. May act as a fidelity factor of the translation reaction, by catalyzing a one-codon backward translocation of tRNAs on improperly translocated ribosomes. Binds to mitochondrial ribosomes in a GTP-dependent manner. In Brugia malayi (Filarial nematode worm), this protein is Translation factor GUF1 homolog, mitochondrial.